The primary structure comprises 164 residues: Ribosome maturation factor RimP (164 aa).

The protein belongs to the RimP family.

It localises to the cytoplasm. In terms of biological role, required for maturation of 30S ribosomal subunits. This chain is Ribosome maturation factor RimP, found in Cellvibrio japonicus (strain Ueda107) (Pseudomonas fluorescens subsp. cellulosa).